The sequence spans 456 residues: UDP-N-acetylmuramate--L-alanine ligase (456 aa).

Position 112-118 (112-118) interacts with ATP; sequence GTHGKTT.

It belongs to the MurCDEF family.

Its subcellular location is the cytoplasm. The enzyme catalyses UDP-N-acetyl-alpha-D-muramate + L-alanine + ATP = UDP-N-acetyl-alpha-D-muramoyl-L-alanine + ADP + phosphate + H(+). It functions in the pathway cell wall biogenesis; peptidoglycan biosynthesis. In terms of biological role, cell wall formation. This is UDP-N-acetylmuramate--L-alanine ligase from Trichlorobacter lovleyi (strain ATCC BAA-1151 / DSM 17278 / SZ) (Geobacter lovleyi).